A 447-amino-acid polypeptide reads, in one-letter code: MTKRVAVIGAGPSGLAQLRAFQSAADQGAEIPEIVCFEKQANWGGLWNYTWRTGLDENGEPVHCSMYRYLWSNGPKEGLEFADYSFEEHFGKQIASYPPRAVLFDYIEGRVHKADVRKWIRFNSPVRWVSYDAETAKFTVTAHNHETDSTYSEDFDHVICASGHFSTPNVPFYEGFDTFNGRIVHAHDFRDAREFEGKDVLVMGASYSAEDIGSQCWKYGAKSITSCYRSAPMGYAWPDNWEEKPALEKLTGKTAHFADGSTRDVDAIILCTGYKHFFSFLPDDLRLKTANRLATADLYKGVAYVHNPAMFYLGMQDQWFTFNMFDAQAWWVRDAILGRITLPKDKAAMLADVAERETREEASDDVKYAIRYQADYVKELVAETDYPSFDIDGACDAFFEWKKHKAKDIMAFRDNSYKSVITGTMAPVHHTPWKEALDDSMEAYLQN.

6 residues coordinate FAD: Ser13, Glu38, Gln40, Leu46, Trp47, and His63. Residues Trp71 and Asn73 each coordinate NADP(+). FAD is bound by residues Asn73 and Val126. NADP(+)-binding residues include Tyr173, Ala205, Ser206, Ser208, and Arg229. FAD-binding residues include Gln318 and Thr321. Residue Arg413 participates in NADP(+) binding.

Belongs to the FMO family. FAD is required as a cofactor.

The catalysed reaction is trimethylamine + NADPH + O2 = trimethylamine N-oxide + NADP(+) + H2O. Catalyzes the oxidation of trimethylamine (TMA) to produce trimethylamine N-oxide (TMAO). TMA is the best substrate, but the enzyme can also oxidize methimazole, indole and dimethylamine (DMA). The polypeptide is Trimethylamine monooxygenase (Roseovarius nubinhibens (strain ATCC BAA-591 / DSM 15170 / ISM)).